A 329-amino-acid polypeptide reads, in one-letter code: Probable fructokinase-2 (329 aa).

The protein belongs to the carbohydrate kinase PfkB family.

It catalyses the reaction D-fructose + ATP = D-fructose 6-phosphate + ADP + H(+). Its pathway is glycan biosynthesis; starch biosynthesis. May play an important role in maintaining the flux of carbon towards starch formation. This chain is Probable fructokinase-2, found in Arabidopsis thaliana (Mouse-ear cress).